The sequence spans 1382 residues: DNA-directed RNA polymerase subunit beta (1382 aa).

It belongs to the RNA polymerase beta chain family. The RNAP catalytic core consists of 2 alpha, 1 beta, 1 beta' and 1 omega subunit. When a sigma factor is associated with the core the holoenzyme is formed, which can initiate transcription.

The catalysed reaction is RNA(n) + a ribonucleoside 5'-triphosphate = RNA(n+1) + diphosphate. Its function is as follows. DNA-dependent RNA polymerase catalyzes the transcription of DNA into RNA using the four ribonucleoside triphosphates as substrates. In Paracoccus denitrificans (strain Pd 1222), this protein is DNA-directed RNA polymerase subunit beta.